A 205-amino-acid polypeptide reads, in one-letter code: Endothelial cell-specific chemotaxis regulator (205 aa).

Positions Met1 to Ser24 are cleaved as a signal peptide. Residues Gln25–Ala124 are Extracellular-facing. Polar residues-rich tracts occupy residues Ser49–Thr71 and Ser86–Ser101. The segment at Ser49–Ser101 is disordered. Residues Phe125–Val145 form a helical membrane-spanning segment. At Ser146–Leu205 the chain is on the cytoplasmic side. A disordered region spans residues Lys153–Ala175. The segment covering Pro163–Ala175 has biased composition (polar residues). Ser198 bears the Phosphoserine mark.

The protein belongs to the ECSCR family. Interacts with FLNA. Interacts with the 20S proteasome subunit PSMA7. Post-translationally, may be heavily O-glycosylated. As to expression, highest expression in endothelial cells. Also detected in vascular smooth muscle, macrophages, lymphocytes, and mast cells.

The protein resides in the cell membrane. Its subcellular location is the cytoplasm. Functionally, regulates endothelial chemotaxis and tube formation. Has a role in angiogenesis and apoptosis via modulation of the actin cytoskeleton and facilitation of proteasomal degradation of the apoptosis inhibitors BIRC3/IAP1 and BIRC2/IAP2. The chain is Endothelial cell-specific chemotaxis regulator (ECSCR) from Homo sapiens (Human).